The sequence spans 188 residues: Probable DNA-directed RNA polymerase subunit delta (188 aa).

One can recognise an HTH HARE-type domain in the interval 14–81; sequence LSMIEVAHAL…GNNVWALRSW (68 aa). The tract at residues 96-188 is disordered; it reads EIEDEEEEEK…EDDSDDTDED (93 aa). 2 stretches are compositionally biased toward acidic residues: residues 118–150 and 158–188; these read IEDEIDPEDEEGTKETTEEDMSYDTQAEDEDKD and ELAEVELDNVDEEVDIEVEDDEDDSDDTDED.

This sequence belongs to the RpoE family. RNAP is composed of a core of 2 alpha, a beta and a beta' subunits. The core is associated with a delta subunit and one of several sigma factors.

Its function is as follows. Participates in both the initiation and recycling phases of transcription. In the presence of the delta subunit, RNAP displays an increased specificity of transcription, a decreased affinity for nucleic acids, and an increased efficiency of RNA synthesis because of enhanced recycling. The chain is Probable DNA-directed RNA polymerase subunit delta from Lactococcus lactis subsp. cremoris (strain MG1363).